The following is a 191-amino-acid chain: Probable protein adenylyltransferase HI_0977 (191 aa).

Positions 37–162 (GSTKGLQQIH…NDLEIRFLLQ (126 aa)) constitute a Fido domain. ATP contacts are provided by residues 67–68 (KG), 112–114 (GNG), Arg-118, and Gln-145.

It belongs to the fic family.

It catalyses the reaction L-tyrosyl-[protein] + ATP = O-(5'-adenylyl)-L-tyrosyl-[protein] + diphosphate. The catalysed reaction is L-threonyl-[protein] + ATP = 3-O-(5'-adenylyl)-L-threonyl-[protein] + diphosphate. Functionally, probable adenylyltransferase that mediates the addition of adenosine 5'-monophosphate (AMP) to specific residues of target proteins. The sequence is that of Probable protein adenylyltransferase HI_0977 from Haemophilus influenzae (strain ATCC 51907 / DSM 11121 / KW20 / Rd).